The following is a 73-amino-acid chain: Sec-independent protein translocase protein TatA (73 aa).

Residues 1–21 (MGSFSIWHWLIVLVIVMLVFG) traverse the membrane as a helical segment. A disordered region spans residues 50–73 (KEQIQQSSATAEKTVDVQAKDVNK). Basic and acidic residues predominate over residues 62–73 (KTVDVQAKDVNK).

It belongs to the TatA/E family. As to quaternary structure, the Tat system comprises two distinct complexes: a TatABC complex, containing multiple copies of TatA, TatB and TatC subunits, and a separate TatA complex, containing only TatA subunits. Substrates initially bind to the TatABC complex, which probably triggers association of the separate TatA complex to form the active translocon.

It localises to the cell inner membrane. In terms of biological role, part of the twin-arginine translocation (Tat) system that transports large folded proteins containing a characteristic twin-arginine motif in their signal peptide across membranes. TatA could form the protein-conducting channel of the Tat system. This is Sec-independent protein translocase protein TatA from Polynucleobacter necessarius subsp. necessarius (strain STIR1).